The chain runs to 303 residues: Tobamovirus multiplication protein 3 (303 aa).

Topologically, residues 1–48 (MRIGGVEVTKFASEMMSSSSSSAVEMLNLKEASNWWSDVNESPIWQDR) are extracellular. A helical membrane pass occupies residues 49-69 (IFHVLAVLYGIVSLVAVIQLV). Residues 70-82 (RIQLRVPEYGWTT) are Cytoplasmic-facing. Residues 83–103 (QKVFHFLNFVVNGVRAVVFVF) form a helical membrane-spanning segment. Residues 104 to 117 (RRNVQFMQPEILQH) are Extracellular-facing. Residues 118-138 (ILLDIPSLAFFTTYALLVLFW) form a helical membrane-spanning segment. Residues 139 to 156 (AEIYYQARAVSTDGLRPS) are Cytoplasmic-facing. Residues 157 to 177 (FFTINAVVYVVQIALWLVLWW) traverse the membrane as a helical segment. Residues 178 to 183 (KPVRVM) are Extracellular-facing. Residues 184 to 204 (VILSKMFFAGVSLFAALGFLL) form a helical membrane-spanning segment. The Cytoplasmic portion of the chain corresponds to 205–232 (YGGRLFLMLQRFPVESKGRRKKLQEVGY). A helical transmembrane segment spans residues 233–253 (VTTICFTCFLIRCIMMCFAAF). Residues 254-265 (DEGANLDVLDHP) are Extracellular-facing. A helical membrane pass occupies residues 266–286 (ILNFIYYLLVEILPSSLVLFI). Residues 287–303 (LRKLPPKRGITQYHQIR) are Cytoplasmic-facing.

Belongs to the plant tobamovirus multiplication TOM1 protein family. As to quaternary structure, constituent of tobamovirus replication complex. Interacts with the helicase domain of tobamovirus-encoded replication proteins.

It localises to the vacuole membrane. Contributes to the intracellular multiplication of tobamoviruses, probably being a membrane anchor promoting the formation of the replication complex. The chain is Tobamovirus multiplication protein 3 (TOM3) from Arabidopsis thaliana (Mouse-ear cress).